The sequence spans 89 residues: Small ribosomal subunit protein bS20 (89 aa).

Positions 1-11 (MANIKSQIKRN) are enriched in polar residues. The disordered stretch occupies residues 1–22 (MANIKSQIKRNLTNEKRRLRNK).

Belongs to the bacterial ribosomal protein bS20 family.

In terms of biological role, binds directly to 16S ribosomal RNA. This Frankia casuarinae (strain DSM 45818 / CECT 9043 / HFP020203 / CcI3) protein is Small ribosomal subunit protein bS20.